The sequence spans 198 residues: Pyridoxal 5'-phosphate synthase subunit PdxT (198 aa).

49-51 provides a ligand contact to L-glutamine; the sequence is GES. The active-site Nucleophile is Cys81. L-glutamine is bound by residues Arg113 and 141–142; that span reads IR. Residues His177 and Glu179 each act as charge relay system in the active site.

Belongs to the glutaminase PdxT/SNO family. In the presence of PdxS, forms a dodecamer of heterodimers. Only shows activity in the heterodimer.

The catalysed reaction is aldehydo-D-ribose 5-phosphate + D-glyceraldehyde 3-phosphate + L-glutamine = pyridoxal 5'-phosphate + L-glutamate + phosphate + 3 H2O + H(+). It catalyses the reaction L-glutamine + H2O = L-glutamate + NH4(+). The protein operates within cofactor biosynthesis; pyridoxal 5'-phosphate biosynthesis. Catalyzes the hydrolysis of glutamine to glutamate and ammonia as part of the biosynthesis of pyridoxal 5'-phosphate. The resulting ammonia molecule is channeled to the active site of PdxS. In Mycobacterium avium (strain 104), this protein is Pyridoxal 5'-phosphate synthase subunit PdxT.